The chain runs to 322 residues: Adenine deaminase (322 aa).

The Zn(2+) site is built by histidine 11, histidine 13, and histidine 189. Glutamate 192 (proton donor) is an active-site residue. Aspartate 270 contacts Zn(2+). Substrate is bound at residue aspartate 271.

This sequence belongs to the metallo-dependent hydrolases superfamily. Adenosine and AMP deaminases family. Adenine deaminase type 2 subfamily. The cofactor is Zn(2+).

It carries out the reaction adenine + H2O + H(+) = hypoxanthine + NH4(+). Catalyzes the hydrolytic deamination of adenine to hypoxanthine. Plays an important role in the purine salvage pathway and in nitrogen catabolism. The chain is Adenine deaminase from Rhizobium etli (strain ATCC 51251 / DSM 11541 / JCM 21823 / NBRC 15573 / CFN 42).